The following is a 202-amino-acid chain: MTKTKIDLKVVLLGYASVGKTCIVTRYTSGQFGDTHTTIGGAFSSKRVVVGETEVLLGIWDTAGTERYQAVNVSYYRRANAAIVCYDLTNRESWEKVTFWAEELTQNEPEIEIYIVGTKLDLIQQGDIKAVPEEEVKQTARRYKAHIFETSSRTGENVSLLFQTIAEDFCKRTNNGTNPVNSNPSNVVNVNTQTQKKKGGCC.

14-21 provides a ligand contact to GTP; sequence GYASVGKT. An Effector region motif is present at residues 35-43; that stretch reads THTTIGGAF. Residues 61–65 and 118–121 contribute to the GTP site; these read DTAGT and TKLD. Residues C201 and C202 are each lipidated (S-geranylgeranyl cysteine).

This sequence belongs to the small GTPase superfamily. Rab family.

Its subcellular location is the endoplasmic reticulum-Golgi intermediate compartment. It localises to the endosome. The protein localises to the endoplasmic reticulum. It is found in the golgi apparatus. The protein resides in the membrane. May be involved in autophagy-related processes. The polypeptide is Ras-related protein Rab-24 (rab24) (Dictyostelium discoideum (Social amoeba)).